A 1033-amino-acid chain; its full sequence is Complement receptor type 2 (1033 aa).

Residues 1-20 (MGAAGLLGVFLALVAPGVLG) form the signal peptide. Sushi domains lie at 21–84 (ISCG…KCEY), 89–148 (SSCP…TCVS), 152–212 (LECP…TCEE), 213–273 (ARCK…VCEE), 274–344 (IFCP…RCEL), 349–408 (VQCP…VCEK), 409–468 (ECQA…QCKV), 469–524 (AACE…LCKE), 525–595 (ITCP…LCKL), 600–659 (VQCS…VCEK), 660–716 (ETCQ…LCKV), 717–781 (IHCH…QCLR), 786–845 (TRCP…TCIK), 849–909 (IGCP…HCKE), and 910–970 (VNCS…VCRS). Residues 21–971 (ISCGSPPPIL…NPPLAVCRSR (951 aa)) are Extracellular-facing. 28 cysteine pairs are disulfide-bonded: C23–C65, C51–C82, C91–C132, C118–C146, C154–C197, C183–C210, C215–C256, C242–C271, C276–C325, C305–C342, C351–C393, C379–C406, C410–C453, C439–C466, C471–C509, C495–C522, C527–C576, C556–C593, C602–C644, C630–C657, C662–C699, C685–C714, C719–C762, C748–C779, C788–C830, C816–C843, C851–C894, and C880–C907. N121 and N127 each carry an N-linked (GlcNAc...) asparagine glycan. The N-linked (GlcNAc...) asparagine glycan is linked to N294. N-linked (GlcNAc...) asparagine glycosylation is present at N372. N492 carries N-linked (GlcNAc...) asparagine glycosylation. N-linked (GlcNAc...) asparagine glycosylation occurs at N623. An N-linked (GlcNAc...) asparagine glycan is attached at N682. N800, N823, and N861 each carry an N-linked (GlcNAc...) asparagine glycan. N911 carries an N-linked (GlcNAc...) asparagine glycan. Intrachain disulfides connect C912–C955 and C941–C968. Residues 972–999 (SLAPVLCGIAAGLILLTFLIVITLYVIS) form a helical membrane-spanning segment. Residues 1000 to 1033 (KHRARNYYTDTSQKEAFHLEAREVYSVDPYNPAS) are Cytoplasmic-facing.

This sequence belongs to the receptors of complement activation (RCA) family. In terms of assembly, interacts (via Sushi domain 1 and 2) with C3. Interacts with CD19. Part of a complex composed of CD19, CR2/CD21, CD81 and IFITM1/CD225 in the membrane of mature B-cells. Interacts (via Sushi domain 1 and 2) with FCER2 (via the C-terminus). Interacts with CD23. Interacts with FCRL5. Interacts with CR1. Interacts with INFNA1. (Microbial infection) Interacts with Epstein-Barr virus gp350 protein. Mature B-lymphocytes, T-lymphocytes, pharyngeal epithelial cells, astrocytes and follicular dendritic cells of the spleen.

The protein resides in the cell membrane. Functionally, serves as a receptor for various ligands including complement component CD3d, HNRNPU OR IFNA1. When C3d is bound to antigens, attaches to C3d on B-cell surface and thereby facilitates the recognition and uptake of antigens by B-cells. This interaction enhances B-cell activation and subsequent immune responses. Forms a complex with several partners on the surface of B-cells including CD19, FCRL5 and CD81, to form the B-cell coreceptor complex that plays a crucial role in B-cell activation and signaling. Also induces specific intracellular signaling separately from the BCR and CD19 by activating the tyrosine kinase SRC, which then phosphorylates nucleolin/NCL and triggers AKT and GSK3 kinase activities in a SYK/CD19-independent manner. Acts as a ligand for CD23 (FcepsilonRII), a low-affinity receptor for IgE, which is expressed on B-cells and other immune cells, and thus participates in the regulation of IgE production. In terms of biological role, (Microbial infection) Acts as a receptor for Epstein-Barr virus. The chain is Complement receptor type 2 (CR2) from Homo sapiens (Human).